The sequence spans 225 residues: UPF0758 protein Shewmr7_0359 (225 aa).

The MPN domain occupies 102–224; that stretch reads VLTNPDLTRD…IVSFAERGWI (123 aa). Residues H173, H175, and D186 each coordinate Zn(2+). The JAMM motif motif lies at 173–186; sequence HNHPSGIAEPSQAD.

The protein belongs to the UPF0758 family.

In Shewanella sp. (strain MR-7), this protein is UPF0758 protein Shewmr7_0359.